Consider the following 1407-residue polypeptide: DNA-directed RNA polymerase subunit beta' (1407 aa).

Zn(2+)-binding residues include Cys-70, Cys-72, Cys-85, and Cys-88. Asp-460, Asp-462, and Asp-464 together coordinate Mg(2+). 4 residues coordinate Zn(2+): Cys-814, Cys-889, Cys-896, and Cys-899. The segment at 1384–1407 is disordered; it reads LVGRSTSSGTEVTSPSKDAIPLGG. Positions 1386-1399 are enriched in polar residues; sequence GRSTSSGTEVTSPS.

It belongs to the RNA polymerase beta' chain family. As to quaternary structure, the RNAP catalytic core consists of 2 alpha, 1 beta, 1 beta' and 1 omega subunit. When a sigma factor is associated with the core the holoenzyme is formed, which can initiate transcription. Requires Mg(2+) as cofactor. The cofactor is Zn(2+).

It catalyses the reaction RNA(n) + a ribonucleoside 5'-triphosphate = RNA(n+1) + diphosphate. In terms of biological role, DNA-dependent RNA polymerase catalyzes the transcription of DNA into RNA using the four ribonucleoside triphosphates as substrates. The sequence is that of DNA-directed RNA polymerase subunit beta' from Xylella fastidiosa (strain Temecula1 / ATCC 700964).